A 176-amino-acid chain; its full sequence is MSKVKKNDEILSEVLVDVNRVTKVVKGGRSFAFSAYVVVGDKAGRVGAGHGKAKEVNEARGKAKQAAKKRMMKVPLYQNRTIHHDVVGKSGAAKVILRRAKAGTGVIAGGSMRAIFDSLGVHDIVAKSIGSTNVYAMISATFDALNKLASPKSIAMRRDKKVNEISVKSADIQVNE.

The 64-residue stretch at 11–74 (LSEVLVDVNR…QAAKKRMMKV (64 aa)) folds into the S5 DRBM domain.

Belongs to the universal ribosomal protein uS5 family. As to quaternary structure, part of the 30S ribosomal subunit. Contacts proteins S4 and S8.

In terms of biological role, with S4 and S12 plays an important role in translational accuracy. Located at the back of the 30S subunit body where it stabilizes the conformation of the head with respect to the body. The sequence is that of Small ribosomal subunit protein uS5 from Rickettsia peacockii (strain Rustic).